Here is a 266-residue protein sequence, read N- to C-terminus: Coiled-coil domain-containing glutamate-rich protein 2 (266 aa).

The N-terminal stretch at 1–23 (MPPRGPASELLLLRLLLLGAATA) is a signal peptide. Basic and acidic residues-rich tracts occupy residues 90-100 (EAGKMRSSQEV), 154-188 (LWQR…EKGV), 204-213 (GGGERREDLP), and 221-266 (QPEA…RREG). The interval 90–266 (EAGKMRSSQE…TLGEQLRREG (177 aa)) is disordered.

As to expression, expressed at higher levels in fetal brain and skeletal muscle. Lower expression is detected in fetal kidney, liver, spleen, thymus, heart and lung.

Its subcellular location is the secreted. This chain is Coiled-coil domain-containing glutamate-rich protein 2 (CCER2), found in Homo sapiens (Human).